We begin with the raw amino-acid sequence, 117 residues long: Huntingtin-interacting protein M (117 aa).

2 disordered regions span residues 1–30 (MSEK…VPRS) and 71–117 (EASN…RKND). The span at 72–81 (ASNNGSMRNT) shows a compositional bias: polar residues. Positions 82-117 (SQDREREVDNNREPHSAESDVTRFLFDEMPKSRKND) are enriched in basic and acidic residues.

In terms of assembly, may interact with the N-terminus of HD.

This Homo sapiens (Human) protein is Huntingtin-interacting protein M.